A 93-amino-acid chain; its full sequence is Alpha-defensin 13 (93 aa).

The signal sequence occupies residues 1–19; the sequence is MKTLVLLSALVLLAFQVQA. The propeptide occupies 20 to 58; that stretch reads DPIQNTDEETKTEEQPGEEDQAVSVSFGDPEGTSLQEES. Residues 22 to 54 are disordered; that stretch reads IQNTDEETKTEEQPGEEDQAVSVSFGDPEGTSL. Disulfide bonds link Cys64/Cys92, Cys66/Cys81, and Cys71/Cys91.

It belongs to the alpha-defensin family. Paneth cells of the small bowel.

The protein resides in the secreted. In terms of biological role, probably contributes to the antimicrobial barrier function of the small bowel mucosa. The polypeptide is Alpha-defensin 13 (Defa13) (Mus musculus (Mouse)).